We begin with the raw amino-acid sequence, 101 residues long: Large ribosomal subunit protein uL23c (101 aa).

It belongs to the universal ribosomal protein uL23 family. In terms of assembly, part of the 50S ribosomal subunit.

It localises to the plastid. Its subcellular location is the chloroplast. In terms of biological role, binds to 23S rRNA. In Cyanidium caldarium (Red alga), this protein is Large ribosomal subunit protein uL23c (rpl23).